The following is a 111-amino-acid chain: Aspartate 1-decarboxylase (111 aa).

Ser-25 acts as the Schiff-base intermediate with substrate; via pyruvic acid in catalysis. At Ser-25 the chain carries Pyruvic acid (Ser). Thr-57 serves as a coordination point for substrate. Residue Tyr-58 is the Proton donor of the active site. 73-75 (GPA) is a substrate binding site.

It belongs to the PanD family. In terms of assembly, heterooctamer of four alpha and four beta subunits. Pyruvate is required as a cofactor. In terms of processing, is synthesized initially as an inactive proenzyme, which is activated by self-cleavage at a specific serine bond to produce a beta-subunit with a hydroxyl group at its C-terminus and an alpha-subunit with a pyruvoyl group at its N-terminus.

It is found in the cytoplasm. The enzyme catalyses L-aspartate + H(+) = beta-alanine + CO2. It participates in cofactor biosynthesis; (R)-pantothenate biosynthesis; beta-alanine from L-aspartate: step 1/1. In terms of biological role, catalyzes the pyruvoyl-dependent decarboxylation of aspartate to produce beta-alanine. This chain is Aspartate 1-decarboxylase, found in Francisella tularensis subsp. holarctica (strain LVS).